The following is a 256-amino-acid chain: Acetyl-coenzyme A carboxylase carboxyl transferase subunit alpha (256 aa).

The CoA carboxyltransferase C-terminal domain occupies 1–236; the sequence is MTDVARILKE…KSHLIDEITQ (236 aa).

It belongs to the AccA family. As to quaternary structure, acetyl-CoA carboxylase is a heterohexamer composed of biotin carboxyl carrier protein (AccB), biotin carboxylase (AccC) and two subunits each of ACCase subunit alpha (AccA) and ACCase subunit beta (AccD).

The protein resides in the cytoplasm. It catalyses the reaction N(6)-carboxybiotinyl-L-lysyl-[protein] + acetyl-CoA = N(6)-biotinyl-L-lysyl-[protein] + malonyl-CoA. Its pathway is lipid metabolism; malonyl-CoA biosynthesis; malonyl-CoA from acetyl-CoA: step 1/1. Its function is as follows. Component of the acetyl coenzyme A carboxylase (ACC) complex. First, biotin carboxylase catalyzes the carboxylation of biotin on its carrier protein (BCCP) and then the CO(2) group is transferred by the carboxyltransferase to acetyl-CoA to form malonyl-CoA. In Streptococcus equi subsp. equi (strain 4047), this protein is Acetyl-coenzyme A carboxylase carboxyl transferase subunit alpha.